A 3132-amino-acid chain; its full sequence is Enniatin synthetase (3132 aa).

The segment at 53–466 is condensation 1; sequence ADDKQRAVGH…VEKVDMMTQE (414 aa). Residues 186–212 form a disordered region; sequence NDEHPRQFETPDSSQATPEEDLQPNPS. The tract at residues 495–887 is adenylation 1; the sequence is SQSPNKAAVA…GRMDSQVKIR (393 aa). The tract at residues 994–1013 is disordered; it reads SQKTHSTPSQQSQAAISSGT. A Carrier 1 domain is found at 1010–1086; it reads SSGTDTETKL…GLKAIVIGTS (77 aa). Ser1047 is subject to O-(pantetheine 4'-phosphoryl)serine. The condensation 2 stretch occupies residues 1105–1534; the sequence is SYAQNRMWFL…ETCISVLPLT (430 aa). The tract at residues 1563-1960 is adenylation 2; sequence FREQAAANPE…GRMDNQFKIR (398 aa). Residues 2021-2177 form an S-adenosyl-L-methionine-dependent N-methyltransferase region; sequence EGWQDHFESG…YLAEVIDGLI (157 aa). Carrier domains are found at residues 2504 to 2578 and 2598 to 2672; these read FPIS…RQGL and APRT…ESSH. O-(pantetheine 4'-phosphoryl)serine is present on residues Ser2538 and Ser2632. The condensation 3 stretch occupies residues 2719-3124; sequence QDVYPSTQMQ…RHVLEEVCKT (406 aa).

This sequence belongs to the NRP synthetase family. It depends on pantetheine 4'-phosphate as a cofactor.

Its pathway is antibiotic biosynthesis; enniatin biosynthesis. Nonribosomal peptide synthetase that synthesizes enniatin by coupling three D-hydroxycarboxylic acids and three L-amino acids via amide and ester bonds in an alternating fashion. Whereas ESYN1 can accept different amino acids as precursors (L-valine, L-isoleucine or L-leucine), only one species of D-hydroxycarboxylic acid can be found in natural enniatin isolates (D-hydroxyisovaleric acid, D-Hiv). D-Hiv stems from L-valine deanimation by a valine aminotransferase to 2-keto-isovaleric acid (2-Kiv), which becomes subsequently reduced by a keto-isovaleric acid reductase (KivR) to D-Hiv. In Fusarium oxysporum (Fusarium vascular wilt), this protein is Enniatin synthetase.